Consider the following 75-residue polypeptide: Small ribosomal subunit protein bS18 (75 aa).

The protein belongs to the bacterial ribosomal protein bS18 family. As to quaternary structure, part of the 30S ribosomal subunit. Forms a tight heterodimer with protein bS6.

Its function is as follows. Binds as a heterodimer with protein bS6 to the central domain of the 16S rRNA, where it helps stabilize the platform of the 30S subunit. In Psychrobacter sp. (strain PRwf-1), this protein is Small ribosomal subunit protein bS18.